Here is a 166-residue protein sequence, read N- to C-terminus: Protein-export protein SecB (166 aa).

The protein belongs to the SecB family. Homotetramer, a dimer of dimers. One homotetramer interacts with 1 SecA dimer.

It localises to the cytoplasm. In terms of biological role, one of the proteins required for the normal export of preproteins out of the cell cytoplasm. It is a molecular chaperone that binds to a subset of precursor proteins, maintaining them in a translocation-competent state. It also specifically binds to its receptor SecA. In Rhizorhabdus wittichii (strain DSM 6014 / CCUG 31198 / JCM 15750 / NBRC 105917 / EY 4224 / RW1) (Sphingomonas wittichii), this protein is Protein-export protein SecB.